A 673-amino-acid polypeptide reads, in one-letter code: Estrogen receptor beta (673 aa).

Positions methionine 1–phenylalanine 181 are modulating. 2 consecutive NR C4-type zinc fingers follow at residues cysteine 182–cysteine 202 and cysteine 218–cysteine 242. The nuclear receptor DNA-binding region spans cysteine 182–methionine 247. The 237-residue stretch at serine 316–asparagine 552 folds into the NR LBD domain. The tract at residues threonine 553–threonine 602 is disordered. Residues serine 554–serine 566 are compositionally biased toward low complexity.

Belongs to the nuclear hormone receptor family. NR3 subfamily. As to quaternary structure, binds DNA as a homodimer. Can form a heterodimer with ER-alpha. In terms of tissue distribution, abundant in the liver and testes, less abundant in the ovary and barely detectable in the muscle.

It is found in the nucleus. Binds estrogens with an affinity similar to that of ER-alpha, and activates expression of reporter genes containing estrogen response elements (ERE) in an estrogen-dependent manner. The sequence is that of Estrogen receptor beta (esr2) from Micropogonias undulatus (Atlantic croaker).